A 779-amino-acid chain; its full sequence is MNNKILEQLEFNKVKELLLPYLKTEQSQEELLELEPMTEASKIEKSFNEISDMEQIFVEHHSFGIVSLSSISESLKRLELSADLNIQELLAIKKVLQSSSDMIHFYSDLDNVSFQSLDRLFENLEQFPNLQGSFQAINDGGFLEHFASPELERIRRQLTNSERRVRQILQDMLKEKAELLSENLIASRSGRSVLPVKNTYRNRISGVVHDISSSGSTVYIEPRAVVTLNEEITQLRADERHEEGRILHAFSDLLRPHVATIRNNAWILGHLDFVRAKYLFMSDNKATIPKISNDSTLALINVRHPLLSNPVANDLHFDHDLTAIVITGPNTGGKTIMLKTLGLAQLMGQSGLPVLADKGSKIAVFNNIFADIGDEQSIEQSLSTFSSHMTHIVSILNEADHNSLVLFDELGAGTDPQEGASLAMAILEHLRLSHIKTMATTHYPELKAYGIETNFVENASMEFDAETLSPTYRFMQGVPGRSNAFEIASRLGLAPFIVKQAKQMTDSDSDVNRIIEQLEAQTLETRRRLDHIKEVEQENLKFNRAVKKLYNEFSHERDKELEKIYQEAQEIVDMALNESDTILKKLNDKSQLKPHEIIDAKAQIKKLAPQVDLSKNKVLNKAKKIKAARAPRIGDDIIVTSYGQRGTLTSQLKDGRWEAQVGIIKMTLTHDEFTLVRVQEEQKVKNKQINVVKKADSSGPRARLDLRGKRYEEAMQELDHFIDQALLNNMGQVDIIHGIGTGVIREGVTKYLRRHKHVKHFAYAPQNAGGSGATIVTLG.

328-335 provides a ligand contact to ATP; the sequence is GPNTGGKT. The region spanning 704 to 779 is the Smr domain; the sequence is LDLRGKRYEE…GSGATIVTLG (76 aa).

Belongs to the DNA mismatch repair MutS family. MutS2 subfamily. In terms of assembly, homodimer. Binds to stalled ribosomes, contacting rRNA.

In terms of biological role, endonuclease that is involved in the suppression of homologous recombination and thus may have a key role in the control of bacterial genetic diversity. Functionally, acts as a ribosome collision sensor, splitting the ribosome into its 2 subunits. Detects stalled/collided 70S ribosomes which it binds and splits by an ATP-hydrolysis driven conformational change. Acts upstream of the ribosome quality control system (RQC), a ribosome-associated complex that mediates the extraction of incompletely synthesized nascent chains from stalled ribosomes and their subsequent degradation. Probably generates substrates for RQC. This is Endonuclease MutS2 from Streptococcus pyogenes serotype M5 (strain Manfredo).